The following is a 588-amino-acid chain: Ribonuclease Y (588 aa).

Residues Val-7 to Val-27 traverse the membrane as a helical segment. The region spanning Val-278–Ala-359 is the KH domain. The region spanning Val-404–Gly-497 is the HD domain.

This sequence belongs to the RNase Y family.

It is found in the cell membrane. Its function is as follows. Endoribonuclease that initiates mRNA decay. This Salinispora tropica (strain ATCC BAA-916 / DSM 44818 / JCM 13857 / NBRC 105044 / CNB-440) protein is Ribonuclease Y.